Reading from the N-terminus, the 508-residue chain is Flagellin (508 aa).

This sequence belongs to the bacterial flagellin family.

The protein resides in the secreted. It localises to the bacterial flagellum. Its function is as follows. Flagellin is the subunit protein which polymerizes to form the filaments of bacterial flagella. In Salmonella oranienberg, this protein is Flagellin (fliC).